The sequence spans 329 residues: Serpentine receptor class alpha-6 (329 aa).

Helical transmembrane passes span 26 to 46, 68 to 88, 104 to 124, 143 to 163, 187 to 207, 238 to 258, and 273 to 293; these read VDLLAIILAFFASYFAIKIVI, LYQISYGIEAIGMLYRGFFML, YFKVLMIGTSGMIFGQTGLLI, IGVCISLIVLVCSTSSGFIIL, NLFSILSTVLTLFNLIVSIFI, ICFLALSQFLWMFMYSFGILI, and FWIAWCYTMPFIALMFPVLLI.

The protein belongs to the nematode receptor-like protein sra family.

The protein localises to the membrane. The chain is Serpentine receptor class alpha-6 (sra-6) from Caenorhabditis elegans.